The following is an 801-amino-acid chain: Transducin beta-like protein 3 (801 aa).

Ala2 is subject to N-acetylalanine. WD repeat units lie at residues 64–105 (EDQE…RLWK), 107–146 (IHTA…GTHH), 149–190 (GSPG…CLAV), 193–232 (AHYS…TTRT), 245–284 (LPEQ…CVYT), 290–329 (GLRQ…LQKQ), 332–372 (GYSE…CQIL), 374–413 (GHTD…QVAC), 419–459 (GHTH…LAKS), 477–516 (CHDK…LLGV), 519–560 (GHRR…KTFE), 562–602 (HDAS…RTLD), and 604–642 (HEDK…EQAE). At Ser257 the chain carries Phosphoserine. Lys407 is covalently cross-linked (Glycyl lysine isopeptide (Lys-Gly) (interchain with G-Cter in SUMO2)).

In terms of assembly, part of the small subunit (SSU) processome, composed of more than 70 proteins and the RNA chaperone small nucleolar RNA (snoRNA) U3.

Its subcellular location is the nucleus. The protein resides in the nucleolus. Its function is as follows. Part of the small subunit (SSU) processome, first precursor of the small eukaryotic ribosomal subunit. During the assembly of the SSU processome in the nucleolus, many ribosome biogenesis factors, an RNA chaperone and ribosomal proteins associate with the nascent pre-rRNA and work in concert to generate RNA folding, modifications, rearrangements and cleavage as well as targeted degradation of pre-ribosomal RNA by the RNA exosome. In Mus musculus (Mouse), this protein is Transducin beta-like protein 3 (Tbl3).